A 197-amino-acid polypeptide reads, in one-letter code: Putative peptidyl-prolyl cis-trans isomerase (197 aa).

The PPIase cyclophilin-type domain maps to 14-195; it reads NEIKLIMHTN…HDITIDSIEI (182 aa).

It belongs to the cyclophilin-type PPIase family.

It carries out the reaction [protein]-peptidylproline (omega=180) = [protein]-peptidylproline (omega=0). PPIases accelerate the folding of proteins. It catalyzes the cis-trans isomerization of proline imidic peptide bonds in oligopeptides. The polypeptide is Putative peptidyl-prolyl cis-trans isomerase (Staphylococcus saprophyticus subsp. saprophyticus (strain ATCC 15305 / DSM 20229 / NCIMB 8711 / NCTC 7292 / S-41)).